The primary structure comprises 442 residues: MTRNYLHKKILIFGMGLTGISCLNFFLSKGIYPKIMDTDKRPKHIEKIIKFKNICYHTGSVNYSWILQSNLIIVSPGITPSHPALKFATKKNIEIIGDIELFVQETKVPIIAITGSNGKSSVTKIVKEIIQKAGFTTYIGGNIGIPALNIVNKFAHFFILELSSFQLERTFSLKAYIATILNITPDHLNRYSSDIKEYEKAKQKIYKNSKICIINVDNPVTINRQAQLTKCISFGVHSGDYHLSHTYTNTWLCYKSLKLINTKKLKLSGRHNYINMLSALAIVHELKISFKISVRILKNFLGLPHRCQKVYKNNNITWINDSKSTNIASTKSAIQSINTKGKIRLILGGDKKSSNLNLLKPILKNNAIVIYCYGKDKKELFNLYPHKSKIFETLQEVMQHISVQVQPGDVVLLSPACSSLDQFSGFEERGNTFVKLIQELIH.

This sequence belongs to the MurCDEF family.

It localises to the cytoplasm. It catalyses the reaction UDP-N-acetyl-alpha-D-muramoyl-L-alanine + D-glutamate + ATP = UDP-N-acetyl-alpha-D-muramoyl-L-alanyl-D-glutamate + ADP + phosphate + H(+). It participates in cell wall biogenesis; peptidoglycan biosynthesis. Its function is as follows. Cell wall formation. Catalyzes the addition of glutamate to the nucleotide precursor UDP-N-acetylmuramoyl-L-alanine (UMA). The protein is UDP-N-acetylmuramoylalanine--D-glutamate ligase of Buchnera aphidicola subsp. Baizongia pistaciae (strain Bp).